Reading from the N-terminus, the 179-residue chain is Transcription factor BOA15 (179 aa).

The protein localises to the nucleus. In terms of biological role, transcription factor that probably coregulates the gene clusters that mediates the biosynthesis of botcinin acid and its botcinin derivatives, acetate-derived polyketides that contribute to virulence when combined with the sesquiterpene botrydial. Botcinin acid and its derivatives have been shown to induce chlorosis and necrosis during host plant infection, but also have antifungal activities. This chain is Transcription factor BOA15, found in Botryotinia fuckeliana (strain B05.10) (Noble rot fungus).